Here is a 266-residue protein sequence, read N- to C-terminus: MSKVLKNALAGYGYNLVALPKEGIAPLLLLYKNKRDVSSSGNNIDKLFALADSPPPIVSKNNATLNLQQNSTVSFDGKAGVDILDWLLQKLKMGKLRGNINADHINSLQISYQNVFEDNVSLLQLDNFISGSEPKVDQFNTFKEKLKDNELFVINSVLKSNSFSVSAQNKNGQNIDLEATIKGIVDADVNVGRSKKDEVLMEYKNATPIVFAFKAQKIIYDHKKWWQFFKKGDAKFRIKDEHGVVLKDESGFPTQSLEETNELINI.

4 beta stranded membrane-spanning segments follow: residues 67-83 (LQQN…GVDI), 95-113 (KLRG…ISYQ), 162-179 (SFSV…DLEA), and 187-203 (ADVN…LMEY).

Belongs to the bacterial gasdermin family. In terms of assembly, monomer. As to quaternary structure, forms large, homooligomeric ring-shaped pores when inserted in membranes.

The protein localises to the cytoplasm. It localises to the cell inner membrane. Its activity is regulated as follows. The full-length protein before cleavage is inactive: intramolecular interactions between the N-terminal domain and the C-terminal region mediate autoinhibition. The pyroptosis-like-inducing activity is carried by the released N-terminal domain (Gasdermin bGSDM, N-terminus). Precursor of a pore-forming protein involved in defense against bacteriophages. Expression of bGSDM and the neighboring protease gene (Gilli_2517) is not toxic in E.coli. Cleavage of this precursor by its dedicated protease releases the active moiety (gasdermin bGSDM, N-terminus) which inserts into membranes, forming pores and triggering cell death. Functionally, pore-forming protein that causes membrane permeabilization via a pyroptosis-like activity. Makes ring-like pores when released. The sequence is that of Gasdermin bGSDM from Gillisia limnaea (strain DSM 15749 / LMG 21470 / R-8282).